A 329-amino-acid polypeptide reads, in one-letter code: UDP-3-O-acylglucosamine N-acyltransferase (329 aa).

The active-site Proton acceptor is the His224.

It belongs to the transferase hexapeptide repeat family. LpxD subfamily. Homotrimer.

The enzyme catalyses a UDP-3-O-[(3R)-3-hydroxyacyl]-alpha-D-glucosamine + a (3R)-hydroxyacyl-[ACP] = a UDP-2-N,3-O-bis[(3R)-3-hydroxyacyl]-alpha-D-glucosamine + holo-[ACP] + H(+). It participates in bacterial outer membrane biogenesis; LPS lipid A biosynthesis. In terms of biological role, catalyzes the N-acylation of UDP-3-O-acylglucosamine using 3-hydroxyacyl-ACP as the acyl donor. Is involved in the biosynthesis of lipid A, a phosphorylated glycolipid that anchors the lipopolysaccharide to the outer membrane of the cell. The protein is UDP-3-O-acylglucosamine N-acyltransferase of Albidiferax ferrireducens (strain ATCC BAA-621 / DSM 15236 / T118) (Rhodoferax ferrireducens).